We begin with the raw amino-acid sequence, 51 residues long: Large ribosomal subunit protein bL33 (51 aa).

It belongs to the bacterial ribosomal protein bL33 family.

This chain is Large ribosomal subunit protein bL33, found in Ruthia magnifica subsp. Calyptogena magnifica.